The sequence spans 155 residues: NADH-ubiquinone oxidoreductase chain 6 (155 aa).

Helical transmembrane passes span M24–F44, Y51–I71, A88–G108, and I118–V138.

Belongs to the complex I subunit 6 family.

The protein resides in the mitochondrion membrane. The catalysed reaction is a ubiquinone + NADH + 5 H(+)(in) = a ubiquinol + NAD(+) + 4 H(+)(out). Its function is as follows. Core subunit of the mitochondrial membrane respiratory chain NADH dehydrogenase (Complex I) that is believed to belong to the minimal assembly required for catalysis. Complex I functions in the transfer of electrons from NADH to the respiratory chain. The immediate electron acceptor for the enzyme is believed to be ubiquinone. The polypeptide is NADH-ubiquinone oxidoreductase chain 6 (ND6) (Albinaria caerulea (Land snail)).